We begin with the raw amino-acid sequence, 1066 residues long: Cytoplasmic dynein 2 intermediate chain 1 (1066 aa).

Disordered stretches follow at residues L22 to R366 and Y381 to L408. The residue at position 30 (S30) is a Phosphoserine. Composition is skewed to basic and acidic residues over residues S30 to R135, E147 to E171, D180 to H256, G264 to G308, and N316 to G336. The residue at position 247 (S247) is a Phosphoserine. Acidic residues-rich tracts occupy residues E351–L362 and Y381–N397. Over residues P399–L408 the composition is skewed to basic and acidic residues. The interval A473–R552 is binding to the DYNLT2B-DYNLT1/DYNLT3 dimer. 4 WD repeats span residues I694 to Y734, V775 to I821, I907 to Q947, and T952 to V992.

This sequence belongs to the dynein light intermediate chain family. Intermediate chain of the cytoplasmic dynein complex 2, a multisubunit complex, composed at least of eleven different proteins. The cytoplasmic dynein 2 complex consists of two catalytic heavy chains (HCs) and a number of non-catalytic subunits presented by intermediate chains (ICs), light intermediate chains (LICs) and light chains (LCs). Among them, a heavy chain (DYNC2H1), two intermediate chains (DYNC2I2 and DYNC2I1), a light intermediate chain (DYNC2LI1), and a light chain (DYNLT2B) are unique to the cytoplasmic dynein complex 2, but a subset of the light chains are also shared by dynein-1 and dynein-2 complexes. Interacts with DYNC2I2; their C-terminal domains each bind a copy of the heavy chain, and their extended N-terminal regions are held together by an array of light chain dimers. Interacts with DYNLT2B. Interacts (via the N-terminal half) with DYNLT2B-DYNLT1 dimer or with DYNLT2B-DYNLT3 dimer; this interaction is crucial for retrograde trafficking of ciliary proteins. Expressed in chondrocytes (at protein level).

Its subcellular location is the cell projection. It localises to the cilium. The protein localises to the cytoplasm. The protein resides in the cytoskeleton. It is found in the microtubule organizing center. Its subcellular location is the centrosome. Acts as one of several non-catalytic accessory components of the cytoplasmic dynein 2 complex (dynein-2 complex), a motor protein complex that drives the movement of cargos along microtubules within cilia and flagella in concert with the intraflagellar transport (IFT) system. DYNC2I1 plays a major role in retrograde ciliary protein trafficking in cilia and flagella. Also requires to maintain a functional transition zone. This Homo sapiens (Human) protein is Cytoplasmic dynein 2 intermediate chain 1.